We begin with the raw amino-acid sequence, 335 residues long: Methionine import ATP-binding protein MetN 2 (335 aa).

Positions 2–242 (IEFHNVHKTY…PQHSTTKRFV (241 aa)) constitute an ABC transporter domain. Position 38–45 (38–45 (GHSGAGKS)) interacts with ATP.

It belongs to the ABC transporter superfamily. Methionine importer (TC 3.A.1.24) family. The complex is composed of two ATP-binding proteins (MetN), two transmembrane proteins (MetI) and a solute-binding protein (MetQ).

It is found in the cell inner membrane. It carries out the reaction L-methionine(out) + ATP + H2O = L-methionine(in) + ADP + phosphate + H(+). The catalysed reaction is D-methionine(out) + ATP + H2O = D-methionine(in) + ADP + phosphate + H(+). In terms of biological role, part of the ABC transporter complex MetNIQ involved in methionine import. Responsible for energy coupling to the transport system. In Pseudomonas syringae pv. tomato (strain ATCC BAA-871 / DC3000), this protein is Methionine import ATP-binding protein MetN 2.